The following is a 232-amino-acid chain: tRNA (guanine-N(7)-)-methyltransferase (232 aa).

Residues Glu-63, Glu-88, Asp-115, and Asp-137 each contribute to the S-adenosyl-L-methionine site. Asp-137 is an active-site residue. Substrate contacts are provided by residues Lys-141, Asp-173, and 211–214; that span reads TRYE.

This sequence belongs to the class I-like SAM-binding methyltransferase superfamily. TrmB family.

It catalyses the reaction guanosine(46) in tRNA + S-adenosyl-L-methionine = N(7)-methylguanosine(46) in tRNA + S-adenosyl-L-homocysteine. It participates in tRNA modification; N(7)-methylguanine-tRNA biosynthesis. In terms of biological role, catalyzes the formation of N(7)-methylguanine at position 46 (m7G46) in tRNA. The chain is tRNA (guanine-N(7)-)-methyltransferase from Chelativorans sp. (strain BNC1).